The primary structure comprises 728 residues: Glycine--tRNA ligase (728 aa).

The N-terminal 32 residues, 1–32, are a transit peptide targeting the mitochondrion; that stretch reads MPCLLPTLLRATRAALLLQSPRVVAAPASQRL. A WHEP-TRS domain is found at 52-108; sequence LLAPLRLAVRQQGDFVRKLKEDKAPQVDVDRAVAELKARKRVLEAKELALQPKDDIV. Lysine 193 carries the N6-acetyllysine modification. Residue glutamate 288 participates in glycine binding. Residues 320–322 and 331–332 each bind ATP; these read RNE and RV. Glutamate 339 provides a ligand contact to glycine. A Phosphotyrosine modification is found at tyrosine 442. 446–447 serves as a coordination point for ATP; sequence EI. Lysine 490 is modified (N6-acetyllysine). 565–567 serves as a coordination point for glycine; that stretch reads EPS. Arginine 572 is an ATP binding site. Serine 689 carries the phosphoserine modification. Threonine 725 carries the post-translational modification Phosphothreonine.

The protein belongs to the class-II aminoacyl-tRNA synthetase family. Homodimer.

The protein localises to the cytoplasm. It is found in the mitochondrion. It localises to the cell projection. The protein resides in the axon. Its subcellular location is the secreted. The protein localises to the extracellular exosome. The enzyme catalyses tRNA(Gly) + glycine + ATP = glycyl-tRNA(Gly) + AMP + diphosphate. It carries out the reaction 2 ATP + H(+) = P(1),P(4)-bis(5'-adenosyl) tetraphosphate + diphosphate. Its function is as follows. Catalyzes the ATP-dependent ligation of glycine to the 3'-end of its cognate tRNA, via the formation of an aminoacyl-adenylate intermediate (Gly-AMP). Also produces diadenosine tetraphosphate (Ap4A), a universal pleiotropic signaling molecule needed for cell regulation pathways, by direct condensation of 2 ATPs. Thereby, may play a special role in Ap4A homeostasis. This is Glycine--tRNA ligase (Gars1) from Rattus norvegicus (Rat).